Consider the following 135-residue polypeptide: Immunity protein RhsIA (135 aa).

Positions 58–77 (RKQGRQISLSCGEPPEYSPD) are disordered.

In terms of biological role, immunity component of a toxin-immunity protein module, which functions as a cellular contact-dependent growth inhibition (CDI) system. Specifically inhibits its cognate toxin RhsA. Cell contact is necessary for growth inhibition. The protein is Immunity protein RhsIA (rhsIA) of Dickeya dadantii (strain 3937) (Erwinia chrysanthemi (strain 3937)).